Here is a 142-residue protein sequence, read N- to C-terminus: Large ribosomal subunit protein uL13 (142 aa).

Belongs to the universal ribosomal protein uL13 family. In terms of assembly, part of the 50S ribosomal subunit.

Functionally, this protein is one of the early assembly proteins of the 50S ribosomal subunit, although it is not seen to bind rRNA by itself. It is important during the early stages of 50S assembly. This Pelobacter propionicus (strain DSM 2379 / NBRC 103807 / OttBd1) protein is Large ribosomal subunit protein uL13.